A 66-amino-acid polypeptide reads, in one-letter code: SPbeta prophage-derived uncharacterized protein YosK (66 aa).

In Bacillus subtilis (strain 168), this protein is SPbeta prophage-derived uncharacterized protein YosK (yosK).